Reading from the N-terminus, the 129-residue chain is M-zodatoxin-Lt8d (129 aa).

Residues 1-20 form the signal peptide; the sequence is MKYFVVALALVAAFACIAES. A propeptide spanning residues 21 to 60 is cleaved from the precursor; sequence KPAESEHELAEVEEENELADLEDAVWLEHLADLSDLEEAR. The short motif at 57–60 is the Processing quadruplet motif element; it reads EEAR.

Cleavage of the propeptide depends on the processing quadruplet motif (XXXR, with at least one of X being E). In terms of tissue distribution, expressed by the venom gland.

Its subcellular location is the secreted. In terms of biological role, insecticidal, cytolytic and antimicrobial peptide. Forms voltage-dependent, ion-permeable channels in membranes. At high concentration causes cell membrane lysis. This is M-zodatoxin-Lt8d (cit 1-4) from Lachesana tarabaevi (Spider).